The sequence spans 509 residues: Transcription factor atf-7 (509 aa).

Residues 283–303 (TVSSYHSPLGASSQPPSTQKS) show a composition bias toward polar residues. Disordered stretches follow at residues 283–318 (TVSS…EKQI) and 337–400 (NMSS…ILER). The segment covering 308–318 (SWDHINGEKQI) has biased composition (basic and acidic residues). The span at 337-364 (NMSSSGSDQDQSADMSNAGSTASTSTGN) shows a compositional bias: low complexity. Positions 390-400 (PDERRNTILER) are enriched in basic and acidic residues. Residues 391-464 (DERRNTILER…TERESRCVCL (74 aa)) enclose the bZIP domain. A basic motif region spans residues 393 to 413 (RRNTILERNKAAAVRYRKRKK). The leucine-zipper stretch occupies residues 419 to 450 (MMGRVQAMEAEKNQLLAIQTQNQVLRRELERV).

The protein belongs to the bZIP family. In terms of assembly, interacts with serine/threonine kinase pmk-1; perhaps in a manner dependent on dual specificity protein kinase sek-1. Expressed in intestinal cells.

The protein resides in the nucleus. It is found in the chromosome. Transcription factor which regulates the transcription of various genes, including those involved in innate immunity and oxidative stress responses. Binds to promoter regions of genes, probably at 5'-[GACGTCA]-3' consensus sequences. Together with transcription factor daf-19, involved in regulation of the serotonergic response of ADF neurons to pathogenic food. Modulates response to infection by the Gram-negative bacterium P.aeruginosa, acting downstream of the p38 signal transduction pathway effector serine/threonine kinase pmk-1. May act with transcription factor elt-2 to control p38 gene induction in response to bacterial infection. May be phosphorylated by pmk-1. Regulates transcription of the metallothionein gene, mtl-1, perhaps acting downstream of pmk-1. The chain is Transcription factor atf-7 from Caenorhabditis elegans.